The chain runs to 58 residues: Small ribosomal subunit protein bS21 (58 aa).

Positions V28 to F58 are disordered. Basic and acidic residues predominate over residues D31–S42. Positions I43–F58 are enriched in basic residues.

It belongs to the bacterial ribosomal protein bS21 family.

The sequence is that of Small ribosomal subunit protein bS21 from Syntrophomonas wolfei subsp. wolfei (strain DSM 2245B / Goettingen).